The sequence spans 365 residues: G-protein coupled receptor 68 (365 aa).

The Extracellular portion of the chain corresponds to 1–12 (MGNITADNSSMS). N-linked (GlcNAc...) asparagine glycosylation is found at Asn3 and Asn8. A helical transmembrane segment spans residues 13–49 (CTIDHTIHQTLAPVVYVTVLVVGFPANCLSLYFGYLQ). 2 cysteine pairs are disulfide-bonded: Cys13–Cys258 and Cys94–Cys172. The Cytoplasmic segment spans residues 50–53 (IKAR). A helical transmembrane segment spans residues 54-84 (NELGVYLCNLTVADLFYICSLPFWLQYVLQH). The Extracellular segment spans residues 85–89 (DNWSH). Residues 90 to 125 (GDLSCQVCGILLYENIYISVGFLCCISVDRYLAVAH) form a helical membrane-spanning segment. At 126 to 133 (PFRFHQFR) the chain is on the cytoplasmic side. The chain crosses the membrane as a helical span at residues 134-160 (TLKAAVGVSVVIWAKELLTSIYFLMHE). Residues 161–176 (EVIEDENQHRVCFEHY) lie on the Extracellular side of the membrane. The interval 161-176 (EVIEDENQHRVCFEHY) is extracellular loop 2 (ECL2). The helical transmembrane segment at 177-214 (PIQAWQRAINYYRFLVGFLFPICLLLASYQGILRAVRR) threads the bilayer. At 215–218 (SHGT) the chain is on the cytoplasmic side. A helical membrane pass occupies residues 219–254 (QKSRKDQIQRLVLSTVVIFLACFLPYHVLLLVRSVW). The Extracellular portion of the chain corresponds to 255–260 (EASCDF). Residues 261 to 289 (AKGVFNAYHFSLLLTSFNCVADPVLYCFV) traverse the membrane as a helical segment. Residues 290 to 365 (SETTHRDLAR…SGGFPTGRLA (76 aa)) lie on the Cytoplasmic side of the membrane. Residues 345-365 (HPAFQTPNSPGSGGFPTGRLA) form a disordered region. A compositionally biased stretch (gly residues) spans 355–365 (GSGGFPTGRLA).

It belongs to the G-protein coupled receptor 1 family. Found at low level in a wide range of tissues, but significantly expressed in lung, kidney, bone and nervous system.

The protein localises to the cell membrane. Activated by a network of residues that connects an extracellular-facing cavity to Glu-149, a conserved charged residue buried in the transmembrane core of the receptor. Protonation likely drives conformational changes in extracellular loop 2 (ECL2), which stabilizes movement of transmembrane 3 (TM3) and a series of rearrangements that connect the extracellular-facing cavity to Glu-149, a residue only conserved in proton-sensing G-protein coupled receptors. Activated in an allosteric manner by divalent metal ions at the extracellular surface following the order: Cd(2+) &gt; Co(2+) &gt; Ni(2+) &gt; Zn(2+) &gt; Fe(2+) &gt; Ca(2+) &gt; Mg(2+). Activated by the benzodiazepine drug lorazepam, a non-selective GPR68 positive allosteric modulator. Activated by ogerin (ZINC67740571), a selective GPR68 positive allosteric modulator. Activated by small molecule MS48107, a selective positive allosteric modulator. Inhibited by small molecule ogremorphin, inducing ferroptosis in cancer cells. Proton-sensing G-protein coupled receptor activated by extracellular pH, which is required to monitor pH changes and generate adaptive reactions. The receptor is almost silent at pH 7.8 but fully activated at pH 6.8. Ligand binding causes a conformation change that triggers signaling via guanine nucleotide-binding proteins (G proteins) and modulates the activity of downstream effectors, such as phospholipase C. GPR68 is mainly coupled to G(q) G proteins and mediates production of diacylglycerol (DAG) and inositol 1,4,5-trisphosphate (IP3). Acts as a key mechanosensor of fluid shear stress and membrane stretch. Expressed in endothelial cells of small-diameter resistance arteries, where it mediates flow-induced dilation in response to shear stress. May represents an osteoblastic pH sensor regulating cell-mediated responses to acidosis in bone. Acts as a regulator of calcium-sensing receptor CASR in a seesaw manner: GPR68-mediated signaling inhibits CASR signaling in response to protons, while CASR inhibits GPR68 in presence of extracellular calcium. The chain is G-protein coupled receptor 68 from Homo sapiens (Human).